We begin with the raw amino-acid sequence, 155 residues long: Deoxyuridine 5'-triphosphate nucleotidohydrolase (155 aa).

Substrate-binding positions include 74 to 76 (RSG), Asn87, and 91 to 93 (LID).

It belongs to the dUTPase family. It depends on Mg(2+) as a cofactor.

It catalyses the reaction dUTP + H2O = dUMP + diphosphate + H(+). Its pathway is pyrimidine metabolism; dUMP biosynthesis; dUMP from dCTP (dUTP route): step 2/2. This enzyme is involved in nucleotide metabolism: it produces dUMP, the immediate precursor of thymidine nucleotides and it decreases the intracellular concentration of dUTP so that uracil cannot be incorporated into DNA. The protein is Deoxyuridine 5'-triphosphate nucleotidohydrolase of Xylella fastidiosa (strain M23).